We begin with the raw amino-acid sequence, 377 residues long: Chorismate synthase (377 aa).

Position 47 (Arg47) interacts with NADP(+). FMN contacts are provided by residues 124-126, 252-253, Gly296, 311-315, and Arg338; these read RSS, NS, and KPTPS.

It belongs to the chorismate synthase family. Requires FMNH2 as cofactor.

It carries out the reaction 5-O-(1-carboxyvinyl)-3-phosphoshikimate = chorismate + phosphate. Its pathway is metabolic intermediate biosynthesis; chorismate biosynthesis; chorismate from D-erythrose 4-phosphate and phosphoenolpyruvate: step 7/7. In terms of biological role, catalyzes the anti-1,4-elimination of the C-3 phosphate and the C-6 proR hydrogen from 5-enolpyruvylshikimate-3-phosphate (EPSP) to yield chorismate, which is the branch point compound that serves as the starting substrate for the three terminal pathways of aromatic amino acid biosynthesis. This reaction introduces a second double bond into the aromatic ring system. This chain is Chorismate synthase, found in Methanococcus vannielii (strain ATCC 35089 / DSM 1224 / JCM 13029 / OCM 148 / SB).